The chain runs to 367 residues: 4-hydroxyphenylpyruvate dioxygenase (367 aa).

VOC domains are found at residues 3-135 (GFDH…FVDR) and 166-324 (LIDH…IFTN). 3 residues coordinate Fe cation: H169, H252, and E335.

It belongs to the 4HPPD family. The cofactor is Fe cation.

It catalyses the reaction 3-(4-hydroxyphenyl)pyruvate + O2 = homogentisate + CO2. Its pathway is amino-acid degradation; L-phenylalanine degradation; acetoacetate and fumarate from L-phenylalanine: step 3/6. Key enzyme in the degradation of tyrosine. The protein is 4-hydroxyphenylpyruvate dioxygenase (hpd) of Dictyostelium discoideum (Social amoeba).